A 333-amino-acid polypeptide reads, in one-letter code: Gap junction alpha-4 protein (333 aa).

Residues 1 to 20 (MGDWGFLEKLLDQVQEHSTV) are Cytoplasmic-facing. Residues 21–40 (VGKIWLTVLFIFRILILGLA) traverse the membrane as a helical segment. At 41-76 (GESVWGDEQSDFECNTAQPGCTNVCYDQAFPISHIR) the chain is on the extracellular side. A helical transmembrane segment spans residues 77–99 (YWVLQFLFVSTPTLVYLGHVIYL). Over 100–148 (SRREERLRQKEGELRALPAKDPRVERALASIERQMAKISVAEDGHLRIR) the chain is Cytoplasmic. Residues 149–165 (GALMGTYVASVLCKSVL) form a helical membrane-spanning segment. The Extracellular portion of the chain corresponds to 166–207 (EAGFLYGQWRLYGWTMEPVFVCQRSPCPYLVDCFVSRPTEKT). The helical transmembrane segment at 208-230 (IFIIFMLVVGLISLVLNLLELAY) threads the bilayer. The Cytoplasmic portion of the chain corresponds to 231 to 333 (LLCRCLSRGV…SSSASKKQYV (103 aa)). The interval 303-333 (SRAPLFLDPPPQTGRKSPSRPSSSASKKQYV) is disordered. Low complexity predominate over residues 317 to 333 (RKSPSRPSSSASKKQYV).

This sequence belongs to the connexin family. Alpha-type (group II) subfamily. As to quaternary structure, a connexon is composed of a hexamer of connexins.

It localises to the cell membrane. The protein localises to the cell junction. It is found in the gap junction. In terms of biological role, one gap junction consists of a cluster of closely packed pairs of transmembrane channels, the connexons, through which materials of low MW diffuse from one cell to a neighboring cell. The protein is Gap junction alpha-4 protein (GJA4) of Bos taurus (Bovine).